Consider the following 485-residue polypeptide: Glutamyl-tRNA(Gln) amidotransferase subunit A (485 aa).

Active-site charge relay system residues include Lys-79 and Ser-154. The Acyl-ester intermediate role is filled by Ser-178.

It belongs to the amidase family. GatA subfamily. In terms of assembly, heterotrimer of A, B and C subunits.

It catalyses the reaction L-glutamyl-tRNA(Gln) + L-glutamine + ATP + H2O = L-glutaminyl-tRNA(Gln) + L-glutamate + ADP + phosphate + H(+). Allows the formation of correctly charged Gln-tRNA(Gln) through the transamidation of misacylated Glu-tRNA(Gln) in organisms which lack glutaminyl-tRNA synthetase. The reaction takes place in the presence of glutamine and ATP through an activated gamma-phospho-Glu-tRNA(Gln). The sequence is that of Glutamyl-tRNA(Gln) amidotransferase subunit A from Staphylococcus epidermidis (strain ATCC 35984 / DSM 28319 / BCRC 17069 / CCUG 31568 / BM 3577 / RP62A).